A 219-amino-acid polypeptide reads, in one-letter code: HTH-type transcriptional regulator LutR (219 aa).

The HTH gntR-type domain maps to Met-1–Phe-56. The H-T-H motif DNA-binding region spans Val-16–Ser-35.

Functionally, negatively regulates the transcription of the lutABC operon, which is required for L-lactate utilization. LutR activity is regulated by lactate, since presence of L-lactate, that probably binds to LutR, leads to derepression of the operon. Also appears to be essential for bacilysin biosynthesis. The sequence is that of HTH-type transcriptional regulator LutR (lutR) from Bacillus subtilis (strain 168).